The following is a 174-amino-acid chain: Small ribosomal subunit protein uS5 (174 aa).

The region spanning 18 to 81 is the S5 DRBM domain; sequence WQERVIQIRR…ADGKKHLIDI (64 aa).

It belongs to the universal ribosomal protein uS5 family. As to quaternary structure, part of the 30S ribosomal subunit. Contacts proteins S4 and S8.

Functionally, with S4 and S12 plays an important role in translational accuracy. Its function is as follows. Located at the back of the 30S subunit body where it stabilizes the conformation of the head with respect to the body. The protein is Small ribosomal subunit protein uS5 of Trichormus variabilis (strain ATCC 29413 / PCC 7937) (Anabaena variabilis).